The sequence spans 704 residues: Elongation factor G (704 aa).

Residues 8-291 (DKVRNIGIMA…AVVEYLASPV (284 aa)) form the tr-type G domain. GTP-binding positions include 17-24 (AHIDAGKT), 90-94 (DTPGH), and 144-147 (NKMD).

It belongs to the TRAFAC class translation factor GTPase superfamily. Classic translation factor GTPase family. EF-G/EF-2 subfamily.

The protein resides in the cytoplasm. Catalyzes the GTP-dependent ribosomal translocation step during translation elongation. During this step, the ribosome changes from the pre-translocational (PRE) to the post-translocational (POST) state as the newly formed A-site-bound peptidyl-tRNA and P-site-bound deacylated tRNA move to the P and E sites, respectively. Catalyzes the coordinated movement of the two tRNA molecules, the mRNA and conformational changes in the ribosome. This chain is Elongation factor G, found in Pelodictyon phaeoclathratiforme (strain DSM 5477 / BU-1).